The primary structure comprises 368 residues: Flagellar P-ring protein (368 aa).

The first 22 residues, Met-1–Ala-22, serve as a signal peptide directing secretion.

The protein belongs to the FlgI family. The basal body constitutes a major portion of the flagellar organelle and consists of four rings (L,P,S, and M) mounted on a central rod.

It localises to the periplasm. Its subcellular location is the bacterial flagellum basal body. Functionally, assembles around the rod to form the L-ring and probably protects the motor/basal body from shearing forces during rotation. The sequence is that of Flagellar P-ring protein from Bordetella pertussis (strain Tohama I / ATCC BAA-589 / NCTC 13251).